Reading from the N-terminus, the 153-residue chain is Myosin regulatory light chain LC-2, mantle muscle (153 aa).

A1 carries the blocked amino end (Ala) modification. EF-hand domains are found at residues 13-48 and 82-117; these read RQMQ…LGRV and DPED…MGDN. Ca(2+)-binding residues include D26, D28, D30, and D37.

In molluscan muscle, calcium regulation is associated with myosin rather than with actin. Muscle myosin contains two types of light chains: the catalytic light chain, essential for ATPase activity, and the regulatory light chain, a calcium-binding protein responsible for Ca(2+) dependent binding and Ca(2+) dependent Mg-ATPase activity. The chain is Myosin regulatory light chain LC-2, mantle muscle from Todarodes pacificus (Japanese flying squid).